The chain runs to 208 residues: Uracil phosphoribosyltransferase (208 aa).

5-phospho-alpha-D-ribose 1-diphosphate is bound by residues Arg-78, Arg-103, and 130–138 (DPMLATGGS). Uracil contacts are provided by residues Ile-193 and 198–200 (GDA). Residue Asp-199 coordinates 5-phospho-alpha-D-ribose 1-diphosphate.

This sequence belongs to the UPRTase family. Mg(2+) serves as cofactor.

It catalyses the reaction UMP + diphosphate = 5-phospho-alpha-D-ribose 1-diphosphate + uracil. It functions in the pathway pyrimidine metabolism; UMP biosynthesis via salvage pathway; UMP from uracil: step 1/1. Its activity is regulated as follows. Allosterically activated by GTP. Its function is as follows. Catalyzes the conversion of uracil and 5-phospho-alpha-D-ribose 1-diphosphate (PRPP) to UMP and diphosphate. This is Uracil phosphoribosyltransferase from Aeromonas salmonicida (strain A449).